We begin with the raw amino-acid sequence, 98 residues long: Large ribosomal subunit protein uL23 (98 aa).

This sequence belongs to the universal ribosomal protein uL23 family. In terms of assembly, part of the 50S ribosomal subunit. Contacts protein L29, and trigger factor when it is bound to the ribosome.

One of the early assembly proteins it binds 23S rRNA. One of the proteins that surrounds the polypeptide exit tunnel on the outside of the ribosome. Forms the main docking site for trigger factor binding to the ribosome. In Methylobacterium sp. (strain 4-46), this protein is Large ribosomal subunit protein uL23.